The following is a 720-amino-acid chain: Catalase-peroxidase (720 aa).

The first 21 residues, 1 to 21 (MSENKCPVMHGSATTTENSMA), serve as a signal peptide directing secretion. Positions 94–222 (WHAAGTYRIA…LAAVMMGLIY (129 aa)) form a cross-link, tryptophyl-tyrosyl-methioninium (Trp-Tyr) (with M-248). Histidine 95 functions as the Proton acceptor in the catalytic mechanism. A cross-link (tryptophyl-tyrosyl-methioninium (Tyr-Met) (with W-94)) is located at residues 222–248 (YVNPEGVDGKPDPLKTAQDIRETFARM). Histidine 263 contributes to the heme b binding site.

It belongs to the peroxidase family. Peroxidase/catalase subfamily. Homodimer or homotetramer. Heme b serves as cofactor. Formation of the three residue Trp-Tyr-Met cross-link is important for the catalase, but not the peroxidase activity of the enzyme.

The enzyme catalyses H2O2 + AH2 = A + 2 H2O. It carries out the reaction 2 H2O2 = O2 + 2 H2O. Bifunctional enzyme with both catalase and broad-spectrum peroxidase activity. The protein is Catalase-peroxidase of Shewanella denitrificans (strain OS217 / ATCC BAA-1090 / DSM 15013).